Consider the following 208-residue polypeptide: Thymidylate kinase (208 aa).

Residue 10–17 (GPDGSGKT) participates in ATP binding.

It belongs to the thymidylate kinase family.

It carries out the reaction dTMP + ATP = dTDP + ADP. In terms of biological role, phosphorylation of dTMP to form dTDP in both de novo and salvage pathways of dTTP synthesis. In Listeria monocytogenes serotype 4a (strain HCC23), this protein is Thymidylate kinase.